Reading from the N-terminus, the 293-residue chain is ATP phosphoribosyltransferase (293 aa).

The protein belongs to the ATP phosphoribosyltransferase family. Long subfamily. It depends on Mg(2+) as a cofactor.

It is found in the cytoplasm. The catalysed reaction is 1-(5-phospho-beta-D-ribosyl)-ATP + diphosphate = 5-phospho-alpha-D-ribose 1-diphosphate + ATP. It participates in amino-acid biosynthesis; L-histidine biosynthesis; L-histidine from 5-phospho-alpha-D-ribose 1-diphosphate: step 1/9. With respect to regulation, feedback inhibited by histidine. In terms of biological role, catalyzes the condensation of ATP and 5-phosphoribose 1-diphosphate to form N'-(5'-phosphoribosyl)-ATP (PR-ATP). Has a crucial role in the pathway because the rate of histidine biosynthesis seems to be controlled primarily by regulation of HisG enzymatic activity. This chain is ATP phosphoribosyltransferase, found in Nitratidesulfovibrio vulgaris (strain DSM 19637 / Miyazaki F) (Desulfovibrio vulgaris).